Reading from the N-terminus, the 635-residue chain is Early transcription factor 70 kDa subunit (635 aa).

Residues 32–185 form the Helicase ATP-binding domain; it reads RSIIDENKSV…SNIISLMSDE (154 aa). Position 45–52 (45–52) interacts with ATP; the sequence is HIMGSGKT. Residues 135-138 carry the DEXH box motif; the sequence is DEAH. Residues 326–505 form the Helicase C-terminal domain; the sequence is KFKYFINKIE…TLPFDIKKLL (180 aa).

It belongs to the helicase family. VETF subfamily. As to quaternary structure, heterodimer of a 70 kDa and a 82 kDa subunit. Part of the early transcription complex composed of ETF, RAP94, and the DNA-directed RNA polymerase.

It is found in the virion. In terms of biological role, acts with RNA polymerase to initiate transcription from early gene promoters. Is recruited by the RPO-associated protein of 94 kDa (RAP94) to form the early transcription complex, which also contains the core RNA polymerase. ETF heterodimer binds to early gene promoters. This Oryctolagus cuniculus (Rabbit) protein is Early transcription factor 70 kDa subunit (VETFS).